Here is a 229-residue protein sequence, read N- to C-terminus: Transmembrane protein 182 (229 aa).

Positions 1 to 26 are cleaved as a signal peptide; sequence MRLNIAIFFGALFGALGVLLFLVAFG. The Extracellular segment spans residues 27–114; it reads SDYWLLATEV…SYDSAVIYRG (88 aa). Asn47 is a glycosylation site (N-linked (GlcNAc...) asparagine). Residues 49–59 form an interaction with ITGB1 region; the sequence is TFHHEGFFWRC. The N-linked (GlcNAc...) asparagine glycan is linked to Asn102. The helical transmembrane segment at 115–135 threads the bilayer; that stretch reads FWAVLMLLGVVAVVIASFLII. Residues 136-153 are Cytoplasmic-facing; that stretch reads CAAPFASHFLYKAGGGSY. The helical transmembrane segment at 154-174 threads the bilayer; that stretch reads IAAGILFSLVVMLYVIWVQAV. Residues 175–200 lie on the Extracellular side of the membrane; the sequence is ADMESYRNMKMKDCLDFTPSVLYGWS. Residues 201-221 form a helical membrane-spanning segment; it reads FFLAPAGIFFSLLAGLLFLVV. Residues 222–229 are Cytoplasmic-facing; sequence GWHIQIHH.

It belongs to the TMEM182 family. In terms of assembly, interacts with ITGB1.

Its subcellular location is the cell membrane. Its function is as follows. Negatively regulates myogenesis and skeletal muscle regeneration via its association with ITGB1. Modulates ITGB1 activation by decreasing ITGB1-LAMB1 interaction and inhibiting ITGB1-mediated intracellular signaling during myogenesis. The sequence is that of Transmembrane protein 182 (TMEM182) from Homo sapiens (Human).